Reading from the N-terminus, the 412-residue chain is Shaggy-related protein kinase zeta (412 aa).

Residues 1-19 show a composition bias toward pro residues; it reads MTSIPLGPPQPPSLAPQPP. The interval 1–33 is disordered; the sequence is MTSIPLGPPQPPSLAPQPPHLHGGDSLKRRPDI. Over residues 22-33 the composition is skewed to basic and acidic residues; it reads HGGDSLKRRPDI. Ser-26 is modified (phosphoserine). One can recognise a Protein kinase domain in the interval 72–356; sequence YMAERVVGTG…ALEACAHPFF (285 aa). ATP-binding positions include 78-86 and Lys-101; that span reads VGTGSFGIV. Ser-127 is modified (phosphoserine). A phosphothreonine mark is found at Thr-136 and Thr-137. Asp-197 serves as the catalytic Proton acceptor. The residue at position 219 (Ser-219) is a Phosphoserine. The residue at position 232 (Tyr-232) is a Phosphotyrosine. Ser-252 bears the Phosphoserine mark. Thr-293 carries the phosphothreonine modification. A Phosphoserine modification is found at Ser-342. Position 346 is a phosphothreonine (Thr-346).

The protein belongs to the protein kinase superfamily. CMGC Ser/Thr protein kinase family. GSK-3 subfamily. In terms of assembly, binds to KIB1. Interacts with beet curly top virus AL4/C4 and tomato golden mosaic virus AL4/AC4. Autophosphorylated mainly on threonine and serine residues.

It catalyses the reaction L-seryl-[protein] + ATP = O-phospho-L-seryl-[protein] + ADP + H(+). The catalysed reaction is L-threonyl-[protein] + ATP = O-phospho-L-threonyl-[protein] + ADP + H(+). May mediate extracellular signals to regulate transcription in differentiating cells. This is Shaggy-related protein kinase zeta (ASK6) from Arabidopsis thaliana (Mouse-ear cress).